The chain runs to 241 residues: Probable transcriptional regulatory protein Neut_0281 (241 aa).

It belongs to the TACO1 family.

Its subcellular location is the cytoplasm. This is Probable transcriptional regulatory protein Neut_0281 from Nitrosomonas eutropha (strain DSM 101675 / C91 / Nm57).